Consider the following 442-residue polypeptide: SPRY domain-containing protein 3 (442 aa).

Residues Asp-17–Gly-204 enclose the B30.2/SPRY domain. Residues Glu-371 to Gly-394 are disordered. The span at Gly-372 to Pro-390 shows a compositional bias: acidic residues.

This is SPRY domain-containing protein 3 (SPRYD3) from Pongo abelii (Sumatran orangutan).